A 259-amino-acid polypeptide reads, in one-letter code: BTB/POZ domain-containing protein KCTD4 (259 aa).

Positions 33–134 (TLMTLNVGGY…EVKSRWEKEQ (102 aa)) constitute a BTB domain.

The sequence is that of BTB/POZ domain-containing protein KCTD4 (Kctd4) from Mus musculus (Mouse).